A 200-amino-acid chain; its full sequence is Glycerol-3-phosphate acyltransferase (200 aa).

The next 5 helical transmembrane spans lie at 2–22 (FNIPAVAVSYLIGSLSFAVIV), 51–71 (KAAALTLLGDAAKGLVAVLLA), 84–104 (AIAAVALAALVGHMWPVFFGF), 114–134 (LGVLLALSPTTALVCALIWLV), and 158–178 (LFFMPHTSWIFATLAIAILVL).

It belongs to the PlsY family. In terms of assembly, probably interacts with PlsX.

Its subcellular location is the cell inner membrane. It catalyses the reaction an acyl phosphate + sn-glycerol 3-phosphate = a 1-acyl-sn-glycero-3-phosphate + phosphate. It participates in lipid metabolism; phospholipid metabolism. Catalyzes the transfer of an acyl group from acyl-phosphate (acyl-PO(4)) to glycerol-3-phosphate (G3P) to form lysophosphatidic acid (LPA). This enzyme utilizes acyl-phosphate as fatty acyl donor, but not acyl-CoA or acyl-ACP. The sequence is that of Glycerol-3-phosphate acyltransferase from Neisseria meningitidis serogroup A / serotype 4A (strain DSM 15465 / Z2491).